A 182-amino-acid chain; its full sequence is Type-1 fimbrial protein, A chain (182 aa).

The signal sequence occupies residues Met1–Ala23. Cys44 and Cys84 are oxidised to a cystine.

It belongs to the fimbrial protein family.

It localises to the fimbrium. In terms of biological role, fimbriae (also called pili), polar filaments radiating from the surface of the bacterium to a length of 0.5-1.5 micrometers and numbering 100-300 per cell, enable bacteria to colonize the epithelium of specific host organs. This is Type-1 fimbrial protein, A chain (fimA) from Escherichia coli (strain K12).